We begin with the raw amino-acid sequence, 193 residues long: Thymidine kinase (193 aa).

Residue A9 to S16 participates in ATP binding.

This sequence belongs to the thymidine kinase family.

It catalyses the reaction thymidine + ATP = dTMP + ADP + H(+). In terms of biological role, this thymidine kinase is one of the enzymes that catalyze DNA precursor synthesis. Although tk is a nonessential gene, some strains of host E.coli do not support the growth of phages that lack this gene. The sequence is that of Thymidine kinase (TK) from Escherichia coli (Bacteriophage T4).